We begin with the raw amino-acid sequence, 238 residues long: Probable transcriptional regulatory protein M6_Spy0297 (238 aa).

The protein belongs to the TACO1 family. YeeN subfamily.

Its subcellular location is the cytoplasm. The chain is Probable transcriptional regulatory protein M6_Spy0297 from Streptococcus pyogenes serotype M6 (strain ATCC BAA-946 / MGAS10394).